The chain runs to 397 residues: Elongation factor Tu (397 aa).

Residues 10–206 (KPHCNIGTIG…AVDEYIPQPE (197 aa)) form the tr-type G domain. The tract at residues 19–26 (GHIDHGKT) is G1. Residue 19–26 (GHIDHGKT) coordinates GTP. A Mg(2+)-binding site is contributed by threonine 26. The G2 stretch occupies residues 62 to 66 (GITIS). A G3 region spans residues 83–86 (DCPG). GTP-binding positions include 83–87 (DCPGH) and 138–141 (NKCD). Positions 138-141 (NKCD) are G4. The tract at residues 176–178 (SAF) is G5.

The protein belongs to the TRAFAC class translation factor GTPase superfamily. Classic translation factor GTPase family. EF-Tu/EF-1A subfamily. As to quaternary structure, monomer.

It is found in the cytoplasm. The catalysed reaction is GTP + H2O = GDP + phosphate + H(+). In terms of biological role, GTP hydrolase that promotes the GTP-dependent binding of aminoacyl-tRNA to the A-site of ribosomes during protein biosynthesis. The chain is Elongation factor Tu from Cutibacterium acnes (strain DSM 16379 / KPA171202) (Propionibacterium acnes).